The primary structure comprises 671 residues: Probable potassium transport system protein Kup 2 (671 aa).

12 consecutive transmembrane segments (helical) span residues 18-38, 60-80, 103-123, 149-169, 173-193, 218-238, 252-272, 292-312, 343-363, 373-393, 402-422, and 424-444; these read GFLI…LYAM, VSLV…LIAL, WLIV…ALTP, VTTL…ASLV, FGPI…INSF, AGFF…ALYS, WPFV…WLLA, MVIY…QALI, LYIP…VLYF, YSLA…YFLI, IAFI…ASLV, and FING…VMFI.

It belongs to the HAK/KUP transporter (TC 2.A.72) family.

Its subcellular location is the cell membrane. The catalysed reaction is K(+)(in) + H(+)(in) = K(+)(out) + H(+)(out). Functionally, transport of potassium into the cell. Likely operates as a K(+):H(+) symporter. The chain is Probable potassium transport system protein Kup 2 from Lactococcus lactis subsp. cremoris (strain MG1363).